A 195-amino-acid chain; its full sequence is uncharacterized protein (195 aa).

Positions 1-16 (MIRTIIVFMLLTISFG) are cleaved as a signal peptide.

This is an uncharacterized protein from Acanthamoeba polyphaga mimivirus (APMV).